The chain runs to 282 residues: UPF0761 membrane protein HAPS_1376 (282 aa).

A run of 6 helical transmembrane segments spans residues 32-52, 89-109, 124-144, 170-190, 202-222, and 234-254; these read LLSL…LPIF, MGII…SSID, VILS…FAGA, LLKF…YLIV, VGAL…IWYI, and ALAT…VVLL.

This sequence belongs to the UPF0761 family.

The protein localises to the cell inner membrane. The protein is UPF0761 membrane protein HAPS_1376 of Glaesserella parasuis serovar 5 (strain SH0165) (Haemophilus parasuis).